We begin with the raw amino-acid sequence, 439 residues long: Serine/threonine-protein kinase 2 (439 aa).

The Protein kinase domain maps to 87-439; it reads NDDFYHISTG…IFSDWINGRN (353 aa). Residues 93–101 and Lys117 each bind ATP; that span reads ISTGGYGIV. Residue Asp307 is the Proton acceptor of the active site.

The protein belongs to the protein kinase superfamily. Ser/Thr protein kinase family. Post-translationally, phosphorylated in vivo. Autophosphorylated in vitro.

The protein resides in the host endoplasmic reticulum. It is found in the host endoplasmic reticulum-Golgi intermediate compartment. The catalysed reaction is L-seryl-[protein] + ATP = O-phospho-L-seryl-[protein] + ADP + H(+). It catalyses the reaction L-threonyl-[protein] + ATP = O-phospho-L-threonyl-[protein] + ADP + H(+). Its function is as follows. Essential serine-protein kinase involved in the early stage of virion morphogenesis. This Monkeypox virus protein is Serine/threonine-protein kinase 2 (OPG054).